The primary structure comprises 412 residues: Histidine--tRNA ligase (412 aa).

This sequence belongs to the class-II aminoacyl-tRNA synthetase family. Homodimer.

It localises to the cytoplasm. The enzyme catalyses tRNA(His) + L-histidine + ATP = L-histidyl-tRNA(His) + AMP + diphosphate + H(+). This Rickettsia typhi (strain ATCC VR-144 / Wilmington) protein is Histidine--tRNA ligase.